Consider the following 214-residue polypeptide: Thymidylate kinase (214 aa).

Residue 10-17 (GPDGAGKT) participates in ATP binding.

It belongs to the thymidylate kinase family.

It catalyses the reaction dTMP + ATP = dTDP + ADP. Functionally, phosphorylation of dTMP to form dTDP in both de novo and salvage pathways of dTTP synthesis. The protein is Thymidylate kinase of Limosilactobacillus fermentum (strain NBRC 3956 / LMG 18251) (Lactobacillus fermentum).